The chain runs to 737 residues: Catalase-peroxidase (737 aa).

A cross-link (tryptophyl-tyrosyl-methioninium (Trp-Tyr) (with M-245)) is located at residues 89–219 (WHSAGTYRVF…LAASHMGLIY (131 aa)). Histidine 90 functions as the Proton acceptor in the catalytic mechanism. A cross-link (tryptophyl-tyrosyl-methioninium (Tyr-Met) (with W-89)) is located at residues 219–245 (YVNPEGPNGNPDPKAAARDIRVTFGRM). Histidine 260 contacts heme b.

It belongs to the peroxidase family. Peroxidase/catalase subfamily. In terms of assembly, homodimer or homotetramer. Heme b serves as cofactor. Post-translationally, formation of the three residue Trp-Tyr-Met cross-link is important for the catalase, but not the peroxidase activity of the enzyme.

It is found in the cytoplasm. The catalysed reaction is H2O2 + AH2 = A + 2 H2O. It carries out the reaction 2 H2O2 = O2 + 2 H2O. Bifunctional enzyme with both catalase and broad-spectrum peroxidase activity. The protein is Catalase-peroxidase of Aspergillus terreus (strain NIH 2624 / FGSC A1156).